Consider the following 421-residue polypeptide: ATP-dependent RNA helicase RhlB (421 aa).

The Q motif signature appears at 9–37 (QKFSDFALHPQVVEALEKKGFYNCTPIQA). One can recognise a Helicase ATP-binding domain in the interval 40–219 (LPLTLAGRDV…FEQMNNAEYV (180 aa)). 53 to 60 (AQTGTGKT) is an ATP binding site. The short motif at 165–168 (DEAD) is the DEAD box element. Residues 245 to 390 (RLLQTLIEEE…VSKYNPEALM (146 aa)) enclose the Helicase C-terminal domain. The tract at residues 396 to 421 (PLRLTRSRPGNGPRRAGAPRNRRRSG) is disordered. Over residues 402–414 (SRPGNGPRRAGAP) the composition is skewed to low complexity.

It belongs to the DEAD box helicase family. RhlB subfamily. As to quaternary structure, component of the RNA degradosome, which is a multiprotein complex involved in RNA processing and mRNA degradation.

It is found in the cytoplasm. The catalysed reaction is ATP + H2O = ADP + phosphate + H(+). Its function is as follows. DEAD-box RNA helicase involved in RNA degradation. Has RNA-dependent ATPase activity and unwinds double-stranded RNA. The sequence is that of ATP-dependent RNA helicase RhlB from Salmonella paratyphi A (strain AKU_12601).